The following is a 171-amino-acid chain: Iron-sulfur cluster assembly protein 1 (171 aa).

A mitochondrion-targeting transit peptide spans 1–55; that stretch reads MLRAGGRRLLAPGLRRVLGGGAAAPVAVGGAKAYHERVVDHYENPRNVGSFENDD.

The protein belongs to the NifU family. As to quaternary structure, component of the core Fe-S cluster (ISC) assembly machinery. Requires [2Fe-2S] cluster as cofactor.

It is found in the mitochondrion matrix. It functions in the pathway cofactor biosynthesis; iron-sulfur cluster biosynthesis. Its function is as follows. Scaffold protein for the de novo synthesis of iron-sulfur (Fe-S) clusters within mitochondria, which is required for maturation of both mitochondrial and cytoplasmic [2Fe-2S] and [4Fe-4S] proteins. First, a [2Fe-2S] cluster is transiently assembled on the scaffold protein ISCU (ISU1, ISU2 or ISU3). In a second step, the cluster is released from ISCU, transferred to a glutaredoxin, followed by the formation of mitochondrial [2Fe-2S] proteins, the synthesis of [4Fe-4S] clusters and their target-specific insertion into the recipient apoproteins. Cluster assembly on ISCU depends on the function of the cysteine desulfurase complex NFS1-ISD11, which serves as the sulfur donor for cluster synthesis, the iron-binding protein frataxin as the putative iron donor, and the electron transfer chain comprised of ferredoxin reductase and ferredoxin, which receive their electrons from NADH. The chain is Iron-sulfur cluster assembly protein 1 from Oryza sativa subsp. japonica (Rice).